A 130-amino-acid polypeptide reads, in one-letter code: Keratin, high-sulfur matrix protein, IIIA3A (130 aa).

As to expression, wool.

Functionally, the keratin products of mammalian epidermal derivatives such as wool and hair consist of microfibrils embedded in a rigid matrix of other proteins. The matrix proteins include the high-sulfur and high-tyrosine keratins, having molecular weights of 6-20 kDa, whereas the microfibrils contain the larger, low-sulfur keratins (40-56 kDa). The polypeptide is Keratin, high-sulfur matrix protein, IIIA3A (Ovis aries (Sheep)).